The sequence spans 154 residues: 6,7-dimethyl-8-ribityllumazine synthase (154 aa).

Residues Phe-22, 56-58 (AFE), and 80-82 (AVI) contribute to the 5-amino-6-(D-ribitylamino)uracil site. 85-86 (AT) is a binding site for (2S)-2-hydroxy-3-oxobutyl phosphate. His-88 (proton donor) is an active-site residue. Position 113 (Phe-113) interacts with 5-amino-6-(D-ribitylamino)uracil. Arg-127 contacts (2S)-2-hydroxy-3-oxobutyl phosphate.

It belongs to the DMRL synthase family.

It carries out the reaction (2S)-2-hydroxy-3-oxobutyl phosphate + 5-amino-6-(D-ribitylamino)uracil = 6,7-dimethyl-8-(1-D-ribityl)lumazine + phosphate + 2 H2O + H(+). Its pathway is cofactor biosynthesis; riboflavin biosynthesis; riboflavin from 2-hydroxy-3-oxobutyl phosphate and 5-amino-6-(D-ribitylamino)uracil: step 1/2. Catalyzes the formation of 6,7-dimethyl-8-ribityllumazine by condensation of 5-amino-6-(D-ribitylamino)uracil with 3,4-dihydroxy-2-butanone 4-phosphate. This is the penultimate step in the biosynthesis of riboflavin. This is 6,7-dimethyl-8-ribityllumazine synthase from Desulfitobacterium hafniense (strain DSM 10664 / DCB-2).